A 370-amino-acid chain; its full sequence is Phospho-N-acetylmuramoyl-pentapeptide-transferase (370 aa).

10 helical membrane-spanning segments follow: residues 3–23, 54–74, 79–99, 118–138, 161–181, 197–217, 238–258, 262–282, 290–310, and 341–361; these read QIIIAGAVSFLVAIFTTPVLI, GLAILAGILVAYVVAGLYGLL, AFTASGLLVLGLTLGLGAVGF, AKLISQLVLALLFGFLVLRFP, LAVGGTVIGTIVFLIFMYILI, LAAGVTAIVMGSYSLMTFWQF, LAVLAAAGLGGCLGFLWWNAA, IFMGDTGSLALGGLVAGISVT, IIIGALFVIETVSVVIQIVVF, and FWLLAAMAAMAGVAIFYGDWL.

It belongs to the glycosyltransferase 4 family. MraY subfamily. The cofactor is Mg(2+).

Its subcellular location is the cell membrane. It carries out the reaction UDP-N-acetyl-alpha-D-muramoyl-L-alanyl-gamma-D-glutamyl-meso-2,6-diaminopimeloyl-D-alanyl-D-alanine + di-trans,octa-cis-undecaprenyl phosphate = di-trans,octa-cis-undecaprenyl diphospho-N-acetyl-alpha-D-muramoyl-L-alanyl-D-glutamyl-meso-2,6-diaminopimeloyl-D-alanyl-D-alanine + UMP. It functions in the pathway cell wall biogenesis; peptidoglycan biosynthesis. Its function is as follows. Catalyzes the initial step of the lipid cycle reactions in the biosynthesis of the cell wall peptidoglycan: transfers peptidoglycan precursor phospho-MurNAc-pentapeptide from UDP-MurNAc-pentapeptide onto the lipid carrier undecaprenyl phosphate, yielding undecaprenyl-pyrophosphoryl-MurNAc-pentapeptide, known as lipid I. This chain is Phospho-N-acetylmuramoyl-pentapeptide-transferase, found in Corynebacterium aurimucosum (strain ATCC 700975 / DSM 44827 / CIP 107346 / CN-1) (Corynebacterium nigricans).